The primary structure comprises 216 residues: Protein-L-isoaspartate O-methyltransferase (216 aa).

Ser-65 is a catalytic residue.

This sequence belongs to the methyltransferase superfamily. L-isoaspartyl/D-aspartyl protein methyltransferase family.

It is found in the cytoplasm. The catalysed reaction is [protein]-L-isoaspartate + S-adenosyl-L-methionine = [protein]-L-isoaspartate alpha-methyl ester + S-adenosyl-L-homocysteine. Its function is as follows. Catalyzes the methyl esterification of L-isoaspartyl residues in peptides and proteins that result from spontaneous decomposition of normal L-aspartyl and L-asparaginyl residues. It plays a role in the repair and/or degradation of damaged proteins. The chain is Protein-L-isoaspartate O-methyltransferase from Chlorobium phaeobacteroides (strain DSM 266 / SMG 266 / 2430).